Reading from the N-terminus, the 338-residue chain is uncharacterized protein (338 aa).

It belongs to the MG032/MG096/MG288 family.

This is an uncharacterized protein from Mycoplasma pneumoniae (strain ATCC 29342 / M129 / Subtype 1) (Mycoplasmoides pneumoniae).